A 328-amino-acid chain; its full sequence is Homeobox protein Hox-D1 (328 aa).

The Antp-type hexapeptide motif lies at 204 to 209; it reads TFEWMK. Positions 229-288 form a DNA-binding region, homeobox; that stretch reads SSAIRTNFSTKQLTELEKEFHFNKYLTRARRIEIANCLHLNDTQVKIWFQNRRMKQKKRE. The tract at residues 305–328 is disordered; it reads PLSGTTPTKFIKNPGSPSQSQEPS. Residues 319–328 are compositionally biased toward polar residues; it reads GSPSQSQEPS.

The protein belongs to the Antp homeobox family. Labial subfamily.

The protein localises to the nucleus. Its function is as follows. Sequence-specific transcription factor which is part of a developmental regulatory system that provides cells with specific positional identities on the anterior-posterior axis. Acts on the anterior body structures. The protein is Homeobox protein Hox-D1 (HOXD1) of Homo sapiens (Human).